Consider the following 185-residue polypeptide: Ribosome-recycling factor (185 aa).

Residues 138–185 are disordered; it reads ALKKQEKDGEITEDEERRLEKEVQKVTDESTKKIDQMADNKRKEIIQG.

This sequence belongs to the RRF family.

Its subcellular location is the cytoplasm. Responsible for the release of ribosomes from messenger RNA at the termination of protein biosynthesis. May increase the efficiency of translation by recycling ribosomes from one round of translation to another. This Lactobacillus delbrueckii subsp. bulgaricus (strain ATCC 11842 / DSM 20081 / BCRC 10696 / JCM 1002 / NBRC 13953 / NCIMB 11778 / NCTC 12712 / WDCM 00102 / Lb 14) protein is Ribosome-recycling factor.